The following is a 408-amino-acid chain: Succinylornithine transaminase (408 aa).

Lysine 252 carries the N6-(pyridoxal phosphate)lysine modification.

This sequence belongs to the class-III pyridoxal-phosphate-dependent aminotransferase family. AstC subfamily. The cofactor is pyridoxal 5'-phosphate.

It catalyses the reaction N(2)-succinyl-L-ornithine + 2-oxoglutarate = N-succinyl-L-glutamate 5-semialdehyde + L-glutamate. Its pathway is amino-acid degradation; L-arginine degradation via AST pathway; L-glutamate and succinate from L-arginine: step 3/5. Its function is as follows. Catalyzes the transamination of N(2)-succinylornithine and alpha-ketoglutarate into N(2)-succinylglutamate semialdehyde and glutamate. Can also act as an acetylornithine aminotransferase. The protein is Succinylornithine transaminase of Salmonella paratyphi B (strain ATCC BAA-1250 / SPB7).